Consider the following 62-residue polypeptide: DNA-binding protein 7b (62 aa).

The protein belongs to the 7 kDa DNA-binding/endoribonuclease P2 family. Monomer.

The protein localises to the cytoplasm. Can constrain negative DNA supercoils. May be involved in maintaining the integrity of the genome at high temperature. This chain is DNA-binding protein 7b, found in Acidianus hospitalis (strain W1).